The primary structure comprises 1377 residues: Hemoglobin-binding protease hbp autotransporter (1377 aa).

Residues 1–52 (MNRIYSLRYSAVARGFIAVSEFARKCVHKSVRRLCFPVLLLIPVLFSAGSLA) form the signal peptide. Positions 53-302 (GTVNNELGYQ…AVIPLDFIGQ (250 aa)) constitute a Peptidase S6 domain. Residues H125, D153, and S259 each act as charge relay system in the active site. Residues 1111–1377 (DINGEAGTWV…AINANIRYSF (267 aa)) enclose the Autotransporter domain.

Post-translationally, cleaved to release the mature protein from the outer membrane.

It localises to the periplasm. Its subcellular location is the secreted. It is found in the cell surface. The protein resides in the cell outer membrane. Its activity is regulated as follows. Protease activity is inhibited by 3,4-dichloroisocoumarin. In terms of biological role, interacts with hemoglobin, degrades it and subsequently binds the released heme. Could make heme accessible not only for E.coli, but also for B.fragilis during mixed intra-abdominal infections. Has a role in abscess formation. The protein is Hemoglobin-binding protease hbp autotransporter (hbp) of Escherichia coli.